Reading from the N-terminus, the 143-residue chain is MASVELSADVPISPQDTWDHVSELSELGEWLVIHEGWRSELPDQLGEGVQIVGVARAMGMRNRVTWRVTKWDPPHEVAMTGSGKGGTKYGVTLTVRPTKGGSALGLRLELGGRALFGPLGSAAARAVKGDVEKSLKQFAELYG.

This is an uncharacterized protein from Mycobacterium tuberculosis (strain CDC 1551 / Oshkosh).